The following is an 829-amino-acid chain: G-type lectin S-receptor-like serine/threonine-protein kinase At1g34300 (829 aa).

A signal peptide spans 1 to 25; sequence MAVKTPFLKLLPLLLLLLHFPFSFS. 2 consecutive Bulb-type lectin domains span residues 26-140 and 143-260; these read TIPL…SSFD and TDTI…PVNA. Residues 26–421 are Extracellular-facing; it reads TIPLGSVIYA…KGDDNNSKVH (396 aa). N-linked (GlcNAc...) asparagine glycans are attached at residues N46, N98, N130, N151, N172, N178, N189, and N195. Positions 264-301 constitute an EGF-like domain; that stretch reads AVDQCLVYGYCGNFGICSYNDTNPICSCPSRNFDFVDV. Disulfide bonds link C268-C280, C274-C289, C317-C399, C350-C373, and C354-C360. N283 and N320 each carry an N-linked (GlcNAc...) asparagine glycan. The 83-residue stretch at 317–399 folds into the Apple domain; the sequence is CSGNTTMLDL…VPSTSYVKVC (83 aa). N-linked (GlcNAc...) asparagine glycosylation is present at N416. Residues 422-442 form a helical membrane-spanning segment; the sequence is LWIVAVAVIAGLLGLVAVEIG. At 443 to 829 the chain is on the cytoplasmic side; it reads LWWCCCRKNP…RISEGSMLGS (387 aa). Residues 484–759 enclose the Protein kinase domain; the sequence is KSFKEKLGAG…GKVVQMLEGI (276 aa). Residues 490 to 498 and K512 contribute to the ATP site; that span reads LGAGGFGTV. Residue S532 is modified to Phosphoserine. Positions 572–589 are caM-binding; sequence DSAKFLTWEYRFNIALGT. The active-site Proton acceptor is the D608. Phosphoserine is present on residues S625 and S799.

Belongs to the protein kinase superfamily. Ser/Thr protein kinase family.

It is found in the cell membrane. It carries out the reaction L-seryl-[protein] + ATP = O-phospho-L-seryl-[protein] + ADP + H(+). The catalysed reaction is L-threonyl-[protein] + ATP = O-phospho-L-threonyl-[protein] + ADP + H(+). This is G-type lectin S-receptor-like serine/threonine-protein kinase At1g34300 from Arabidopsis thaliana (Mouse-ear cress).